A 251-amino-acid polypeptide reads, in one-letter code: 1-(5-phosphoribosyl)-5-[(5-phosphoribosylamino)methylideneamino] imidazole-4-carboxamide isomerase (251 aa).

Aspartate 8 (proton acceptor) is an active-site residue. Aspartate 131 serves as the catalytic Proton donor.

This sequence belongs to the HisA/HisF family.

The protein localises to the cytoplasm. The catalysed reaction is 1-(5-phospho-beta-D-ribosyl)-5-[(5-phospho-beta-D-ribosylamino)methylideneamino]imidazole-4-carboxamide = 5-[(5-phospho-1-deoxy-D-ribulos-1-ylimino)methylamino]-1-(5-phospho-beta-D-ribosyl)imidazole-4-carboxamide. It participates in amino-acid biosynthesis; L-histidine biosynthesis; L-histidine from 5-phospho-alpha-D-ribose 1-diphosphate: step 4/9. This Burkholderia ambifaria (strain MC40-6) protein is 1-(5-phosphoribosyl)-5-[(5-phosphoribosylamino)methylideneamino] imidazole-4-carboxamide isomerase.